The chain runs to 771 residues: Polyribonucleotide nucleotidyltransferase (771 aa).

Positions 487 and 493 each coordinate Mg(2+). The region spanning 554–613 (PRIETMQIDKAKIRDVIGTGGKVIREIVATTGAKVDIDDEGLIKISSSDLDQIEAARKWI) is the KH domain. An S1 motif domain is found at 623–691 (GKIYDGKVVN…PRGKVRLSMR (69 aa)). The interval 696–771 (ETGAELEDTR…QGHVPDFLKD (76 aa)) is disordered. The segment covering 702-771 (EDTRPAREPR…QGHVPDFLKD (70 aa)) has biased composition (basic and acidic residues).

This sequence belongs to the polyribonucleotide nucleotidyltransferase family. Requires Mg(2+) as cofactor.

Its subcellular location is the cytoplasm. The catalysed reaction is RNA(n+1) + phosphate = RNA(n) + a ribonucleoside 5'-diphosphate. Involved in mRNA degradation. Catalyzes the phosphorolysis of single-stranded polyribonucleotides processively in the 3'- to 5'-direction. The polypeptide is Polyribonucleotide nucleotidyltransferase (Sphingopyxis alaskensis (strain DSM 13593 / LMG 18877 / RB2256) (Sphingomonas alaskensis)).